Consider the following 276-residue polypeptide: Putative serine/threonine-protein kinase R436 (276 aa).

The Protein kinase domain occupies 6–266; that stretch reads YSLDKLIQNR…IKQKLNHFKT (261 aa). Residues 12 to 20 and Lys-35 each bind ATP; that span reads IQNRKSKRI. The Proton acceptor role is filled by Asp-132.

The protein belongs to the protein kinase superfamily. Ser/Thr protein kinase family.

The enzyme catalyses L-seryl-[protein] + ATP = O-phospho-L-seryl-[protein] + ADP + H(+). It catalyses the reaction L-threonyl-[protein] + ATP = O-phospho-L-threonyl-[protein] + ADP + H(+). The chain is Putative serine/threonine-protein kinase R436 from Acanthamoeba polyphaga (Amoeba).